A 183-amino-acid polypeptide reads, in one-letter code: Acidic proline-rich protein HP43A (183 aa).

A signal peptide spans 1–14; sequence MLVVLLTAALLAEH. A disordered region spans residues 22–183; that stretch reads ISQLSEEEQQ…QGSEEQSTSL (162 aa). Acidic residues predominate over residues 52–65; the sequence is SDEEGDDDGEEDGN. 5 tandem repeats follow at residues 81–100, 101–120, 121–140, 141–160, and 161–180. Positions 86-183 are enriched in low complexity; sequence GNQQGPPQQE…QGSEEQSTSL (98 aa).

Its subcellular location is the secreted. The polypeptide is Acidic proline-rich protein HP43A (H29) (Mesocricetus auratus (Golden hamster)).